Here is a 221-residue protein sequence, read N- to C-terminus: Endo-1,4-beta-xylanase 1 (221 aa).

The first 22 residues, 1-22, serve as a signal peptide directing secretion; the sequence is MKFFATIAALVVAAVAAPVAEA. In terms of domain architecture, GH11 spans 29–221; sequence PMLIERAGPG…GTGSASVTVS (193 aa). Glu114 functions as the Nucleophile in the catalytic mechanism. Glu208 serves as the catalytic Proton donor.

Belongs to the glycosyl hydrolase 11 (cellulase G) family.

The protein resides in the secreted. It carries out the reaction Endohydrolysis of (1-&gt;4)-beta-D-xylosidic linkages in xylans.. It functions in the pathway glycan degradation; xylan degradation. Endo-1,4-beta-xylanase involved in the hydrolysis of xylan, a major structural heterogeneous polysaccharide found in plant biomass representing the second most abundant polysaccharide in the biosphere, after cellulose. Hydrolyzes xylans from oat spelt and birchwood at similar rates, but it has no detectable activity toward Avicel or carboxymethyl cellulose. The chain is Endo-1,4-beta-xylanase 1 (xynI) from Aureobasidium pullulans (Black yeast).